We begin with the raw amino-acid sequence, 253 residues long: MSFMVHNRKGSKKQFQVDPLLLPKVPRTNYLHLQEEKHRLQLKKFLLHRMFLVGYIQGNTEKKDISEYYEQLFQSILKHHLGESVTGLMLIYPSTFLHILESSNGTLFRILLDYVAHEKSETEFMLQNMKIVVASHNIPTRLFMQWHISAIKVPVLYLDDESQSPSIEEVTTEFLTMTHKLALQLYKTVKLGAKGPGDNLHQLAPELILPEQIIKYLCKAEEFMDPASFLSMYNRPIHVTLDSDIVWPAPSRF.

This Mus musculus (Mouse) protein is Testis-expressed protein 47 (Tex47).